The chain runs to 237 residues: Phosphoribosylaminoimidazole-succinocarboxamide synthase (237 aa).

The protein belongs to the SAICAR synthetase family.

The catalysed reaction is 5-amino-1-(5-phospho-D-ribosyl)imidazole-4-carboxylate + L-aspartate + ATP = (2S)-2-[5-amino-1-(5-phospho-beta-D-ribosyl)imidazole-4-carboxamido]succinate + ADP + phosphate + 2 H(+). It participates in purine metabolism; IMP biosynthesis via de novo pathway; 5-amino-1-(5-phospho-D-ribosyl)imidazole-4-carboxamide from 5-amino-1-(5-phospho-D-ribosyl)imidazole-4-carboxylate: step 1/2. In Enterococcus faecalis (strain ATCC 700802 / V583), this protein is Phosphoribosylaminoimidazole-succinocarboxamide synthase.